The primary structure comprises 251 residues: uncharacterized protein (251 aa).

The N-terminal stretch at 1-18 is a signal peptide; the sequence is MKILIILSIILCSLFGRA.

Belongs to the MlaA family.

This is an uncharacterized protein from Rickettsia prowazekii (strain Madrid E).